Reading from the N-terminus, the 279-residue chain is Prostatic spermine-binding protein (279 aa).

The first 17 residues, Met-1–Ala-17, serve as a signal peptide directing secretion. Gln-18 is modified (pyrrolidone carboxylic acid). Positions Gln-18–Asn-151 constitute a Jacalin-type lectin domain. Asn-62 is a glycosylation site (N-linked (GlcNAc...) asparagine). Acidic residues-rich tracts occupy residues Asp-160–Asp-177 and Asn-185–Glu-279. The tract at residues Asp-160–Glu-279 is disordered.

It to mouse SBP. In terms of tissue distribution, prostate.

Its function is as follows. Spermine-binding protein is an androgen regulated ventral prostate glycoprotein that binds various polyamines. The protein is Prostatic spermine-binding protein (Sbp) of Rattus norvegicus (Rat).